Here is a 314-residue protein sequence, read N- to C-terminus: MSASNITLTHPTAFLLVGIPGLEHLHIWISIPFCLAYTLALLGNCTLLLIIQADAALHEPMYLFLAMLAAIDLVLSSSALPKMLAIFWFRDREINFFACLAQMFFLHSFSIMESAVLLAMAFDRYVAICKPLHYTKVLTGSLITKIGMAAVARAVTLMTPLPFLLRCFHYCRGPVIAHCYCEHMAVVRLACGDTSFNNIYGIAVAMFIVVLDLLLVILSYIFILQAVLLLASQEARYKAFGTCVSHIGAILAFYTTVVISSVMHRVARHAAPHVHILLANFYLLFPPMVNPIIYGVKTKQIRESILGVFPRKDM.

At 1–27 (MSASNITLTHPTAFLLVGIPGLEHLHI) the chain is on the extracellular side. Asn-5 is a glycosylation site (N-linked (GlcNAc...) asparagine). A helical membrane pass occupies residues 28–48 (WISIPFCLAYTLALLGNCTLL). The Cytoplasmic segment spans residues 49–56 (LIIQADAA). Residues 57-77 (LHEPMYLFLAMLAAIDLVLSS) traverse the membrane as a helical segment. Residues 78–101 (SALPKMLAIFWFRDREINFFACLA) are Extracellular-facing. A disulfide bond links Cys-99 and Cys-191. The chain crosses the membrane as a helical span at residues 102 to 122 (QMFFLHSFSIMESAVLLAMAF). Residues 123-141 (DRYVAICKPLHYTKVLTGS) lie on the Cytoplasmic side of the membrane. A helical transmembrane segment spans residues 142–162 (LITKIGMAAVARAVTLMTPLP). At 163–198 (FLLRCFHYCRGPVIAHCYCEHMAVVRLACGDTSFNN) the chain is on the extracellular side. A helical membrane pass occupies residues 199 to 219 (IYGIAVAMFIVVLDLLLVILS). The Cytoplasmic segment spans residues 220-239 (YIFILQAVLLLASQEARYKA). A helical membrane pass occupies residues 240–260 (FGTCVSHIGAILAFYTTVVIS). Residues 261 to 275 (SVMHRVARHAAPHVH) lie on the Extracellular side of the membrane. Residues 276–296 (ILLANFYLLFPPMVNPIIYGV) traverse the membrane as a helical segment. Over 297–314 (KTKQIRESILGVFPRKDM) the chain is Cytoplasmic.

Belongs to the G-protein coupled receptor 1 family.

It localises to the cell membrane. In terms of biological role, odorant receptor. The polypeptide is Olfactory receptor 52K2 (OR52K2) (Homo sapiens (Human)).